Reading from the N-terminus, the 135-residue chain is DNA-binding protein inhibitor ID-2-B (135 aa).

Positions 23-75 (ARSKAPVDEPMSLLYNMNDCYSKLKELVPSIPPNKKVSKMEILQHVIDYILDL) constitute a bHLH domain. The short motif at 108 to 117 (LNTDISILSL) is the Nuclear export signal element.

In terms of assembly, heterodimer with other HLH proteins.

The protein localises to the cytoplasm. It is found in the nucleus. In terms of biological role, transcriptional regulator (lacking a basic DNA binding domain) which negatively regulates the basic helix-loop-helix (bHLH) transcription factors by forming heterodimers and inhibiting their DNA binding and transcriptional activity. Inhibits the activity of both neurogenic (neurod1/neuroD) and myogenic (myod1/myoD) bHLH factors. May play a role in the regulation of the circadian clock. The chain is DNA-binding protein inhibitor ID-2-B (id2-b) from Xenopus laevis (African clawed frog).